Here is a 260-residue protein sequence, read N- to C-terminus: Tryptophan synthase alpha chain (260 aa).

Active-site proton acceptor residues include Glu52 and Asp63.

This sequence belongs to the TrpA family. Tetramer of two alpha and two beta chains.

The catalysed reaction is (1S,2R)-1-C-(indol-3-yl)glycerol 3-phosphate + L-serine = D-glyceraldehyde 3-phosphate + L-tryptophan + H2O. Its pathway is amino-acid biosynthesis; L-tryptophan biosynthesis; L-tryptophan from chorismate: step 5/5. The alpha subunit is responsible for the aldol cleavage of indoleglycerol phosphate to indole and glyceraldehyde 3-phosphate. The protein is Tryptophan synthase alpha chain of Streptococcus mutans serotype c (strain ATCC 700610 / UA159).